Reading from the N-terminus, the 157-residue chain is ADP-ribosylation factor-like protein 2-binding protein (157 aa).

Belongs to the ARL2BP family.

The protein localises to the cytoplasm. The protein resides in the mitochondrion intermembrane space. Its subcellular location is the cytoskeleton. It is found in the microtubule organizing center. It localises to the centrosome. The protein localises to the nucleus. The protein resides in the spindle. Its subcellular location is the cilium basal body. Plays a role as an effector of the ADP-ribosylation factor-like protein 2, ARL2. The sequence is that of ADP-ribosylation factor-like protein 2-binding protein (arl2bp) from Xenopus tropicalis (Western clawed frog).